The sequence spans 506 residues: Probable cytosol aminopeptidase (506 aa).

Residues K278 and D283 each coordinate Mn(2+). The active site involves K290. 3 residues coordinate Mn(2+): D301, D360, and E362. The active site involves R364.

Belongs to the peptidase M17 family. Mn(2+) serves as cofactor.

It is found in the cytoplasm. It carries out the reaction Release of an N-terminal amino acid, Xaa-|-Yaa-, in which Xaa is preferably Leu, but may be other amino acids including Pro although not Arg or Lys, and Yaa may be Pro. Amino acid amides and methyl esters are also readily hydrolyzed, but rates on arylamides are exceedingly low.. The catalysed reaction is Release of an N-terminal amino acid, preferentially leucine, but not glutamic or aspartic acids.. In terms of biological role, presumably involved in the processing and regular turnover of intracellular proteins. Catalyzes the removal of unsubstituted N-terminal amino acids from various peptides. This Ralstonia nicotianae (strain ATCC BAA-1114 / GMI1000) (Ralstonia solanacearum) protein is Probable cytosol aminopeptidase.